A 289-amino-acid polypeptide reads, in one-letter code: ATP phosphoribosyltransferase (289 aa).

This sequence belongs to the ATP phosphoribosyltransferase family. Long subfamily. Mg(2+) serves as cofactor.

Its subcellular location is the cytoplasm. The enzyme catalyses 1-(5-phospho-beta-D-ribosyl)-ATP + diphosphate = 5-phospho-alpha-D-ribose 1-diphosphate + ATP. Its pathway is amino-acid biosynthesis; L-histidine biosynthesis; L-histidine from 5-phospho-alpha-D-ribose 1-diphosphate: step 1/9. With respect to regulation, feedback inhibited by histidine. Its function is as follows. Catalyzes the condensation of ATP and 5-phosphoribose 1-diphosphate to form N'-(5'-phosphoribosyl)-ATP (PR-ATP). Has a crucial role in the pathway because the rate of histidine biosynthesis seems to be controlled primarily by regulation of HisG enzymatic activity. The chain is ATP phosphoribosyltransferase from Koribacter versatilis (strain Ellin345).